The following is a 422-amino-acid chain: Serine--tRNA ligase (422 aa).

238-240 (TSE) is an L-serine binding site. 269-271 (RKE) contacts ATP. Glu292 contributes to the L-serine binding site. ATP is bound at residue 356-359 (EISS). An L-serine-binding site is contributed by Ser390.

Belongs to the class-II aminoacyl-tRNA synthetase family. Type-1 seryl-tRNA synthetase subfamily. In terms of assembly, homodimer. The tRNA molecule binds across the dimer.

It is found in the cytoplasm. It carries out the reaction tRNA(Ser) + L-serine + ATP = L-seryl-tRNA(Ser) + AMP + diphosphate + H(+). It catalyses the reaction tRNA(Sec) + L-serine + ATP = L-seryl-tRNA(Sec) + AMP + diphosphate + H(+). Its pathway is aminoacyl-tRNA biosynthesis; selenocysteinyl-tRNA(Sec) biosynthesis; L-seryl-tRNA(Sec) from L-serine and tRNA(Sec): step 1/1. Catalyzes the attachment of serine to tRNA(Ser). Is also able to aminoacylate tRNA(Sec) with serine, to form the misacylated tRNA L-seryl-tRNA(Sec), which will be further converted into selenocysteinyl-tRNA(Sec). In Helicobacter hepaticus (strain ATCC 51449 / 3B1), this protein is Serine--tRNA ligase.